A 251-amino-acid polypeptide reads, in one-letter code: Triosephosphate isomerase (251 aa).

9–11 (NWK) serves as a coordination point for substrate. The active-site Electrophile is the His-96. The active-site Proton acceptor is the Glu-168. Residues Gly-174, Ser-214, and 235–236 (GG) contribute to the substrate site.

Belongs to the triosephosphate isomerase family. Homodimer.

The protein resides in the cytoplasm. It carries out the reaction D-glyceraldehyde 3-phosphate = dihydroxyacetone phosphate. It functions in the pathway carbohydrate biosynthesis; gluconeogenesis. It participates in carbohydrate degradation; glycolysis; D-glyceraldehyde 3-phosphate from glycerone phosphate: step 1/1. In terms of biological role, involved in the gluconeogenesis. Catalyzes stereospecifically the conversion of dihydroxyacetone phosphate (DHAP) to D-glyceraldehyde-3-phosphate (G3P). In Porphyromonas gingivalis (strain ATCC 33277 / DSM 20709 / CIP 103683 / JCM 12257 / NCTC 11834 / 2561), this protein is Triosephosphate isomerase.